The sequence spans 311 residues: Aspartate carbamoyltransferase catalytic subunit (311 aa).

Residues arginine 55 and threonine 56 each coordinate carbamoyl phosphate. Lysine 83 is a binding site for L-aspartate. Arginine 105, histidine 133, and glutamine 136 together coordinate carbamoyl phosphate. Positions 166 and 220 each coordinate L-aspartate. Carbamoyl phosphate contacts are provided by glycine 261 and proline 262.

It belongs to the aspartate/ornithine carbamoyltransferase superfamily. ATCase family. In terms of assembly, heterododecamer (2C3:3R2) of six catalytic PyrB chains organized as two trimers (C3), and six regulatory PyrI chains organized as three dimers (R2).

It carries out the reaction carbamoyl phosphate + L-aspartate = N-carbamoyl-L-aspartate + phosphate + H(+). It participates in pyrimidine metabolism; UMP biosynthesis via de novo pathway; (S)-dihydroorotate from bicarbonate: step 2/3. In terms of biological role, catalyzes the condensation of carbamoyl phosphate and aspartate to form carbamoyl aspartate and inorganic phosphate, the committed step in the de novo pyrimidine nucleotide biosynthesis pathway. The polypeptide is Aspartate carbamoyltransferase catalytic subunit (Chlorobium chlorochromatii (strain CaD3)).